A 1388-amino-acid chain; its full sequence is MDDAGEICSFSRSSSSAREDDEEDQRWAALEKLPTYDRARTALLAMPPDGELREVNVQRLAAVERRALLQRVAGVADDHARFLAKFKERVDRVGIKLPTVEVRYENLNIEAESYVGRRGLPTILNTYTIIMEGLTNALCITKKITHKIPILHNVSGIIKPHRMTLLLGPPGSGKTSLLLALAGTSTLKVSGTITYNGHSMEEFVPQRSAAYVSQHDVHMAELTVRETVNFAAKCQGVGHHYDLLMELLRREKEQNIKPDPEIDIYLKAATTGEQKAEVVTNHILKILGLDICADTIVGNNMLRGISGGQKKRLTTAEMIVTPGRALFMDEISTGLDSSTTFQIVNTIRQTIRILGGTAVIALLQPAPETYELFDDIILLSDGQVVYNGPRDHVLEFFKSVGFKCPERKCVADFLQEVTSRKDQKQYWIGSDDTYQYVPVTMIAEAFQSFHVGQAIRSELAIPFEKSKNHPAALATSKYGVSMKELLKANIYREILLMKRNSFLYIFKAIQLKLVAINAMTVFIRTNMYRDSIENGRSYMGALFYGMMMIVYSALAEMGPAIAKLPVLFKQRDLLYYPSWTYSLPSWIIKIPISFLNTTVWVFLTYYVIGFDPNVLRFFRQFLVLFVLCEVIYALFRFIVALTRHPVIASNMGPFCILIFMLSCGFILTRDDVKKWWIWLYWISPLMYALNALAVNEFLGQIWNKSILGYKGPLGRLVLGSSSFLPETKWYWISIGALLGYVLLFNVLYTICLTFLTHAKEIINDEANSYHATRHSSAGNKGMVLPFVPLSITFEDIRYSVDTPEAFKAKGMTEGRLELLKDISGSFRQGVLTALMGVSGAGKTTLLDVLAGRKTSGYVQGSITISGYPKKQETFARISGYCEQNDIHSPNVTVYESLMFSAWLRLPVEIDSATRKMFVYEVMELVEILSLKDALVGLPGVSGLSSERRKRLTIAVELVANPSIIFMDEPTSGLDARAAAIVMRAIRNTVDTGRTVVCTIHQPSIEIFESFDELFLMKQGGEEIYVGPIGRQSCELIKYFEAIQGVSKIKDGYNPSTWMLEVTSTTQEQRTCVDFSQIYKNSELYRRNKNLIKELSAPPEGSSDLSFPTQYSQLFLTQWLACLWKQHLSYWRNPPYIVVRYLFTIVVALLFGTMFWGIGKKRQNQQTLFSIMGAMYSACMAMGVQNSSSVQPAIFVERTIFYRERASHMYSALSYALGQVAIEFPYIFLQTIIYCVLVYAMVGYEWTCAKFLWYLFFMFFTLSYFTFYGMMMAGLTPNNAMSAVVSTAFYNIWNLFSGFLIPRIRIPVWWRWYYWMCPVAWTLNGLLTSQFGDVNDKFNNGVSVSDFIESYFGYKQDLLWVAAVAVVSFAILFAFLFGLSLRLFNFQKR.

Positions 1–24 (MDDAGEICSFSRSSSSAREDDEED) are disordered. An ABC transporter 1 domain is found at 135–406 (TNALCITKKI…FKSVGFKCPE (272 aa)). 168 to 175 (GPPGSGKT) provides a ligand contact to ATP. Residues 484–697 (ELLKANIYRE…ALNALAVNEF (214 aa)) form the ABC transmembrane type-2 1 domain. The next 7 membrane-spanning stretches (helical) occupy residues 503–523 (LYIF…TVFI), 541–561 (ALFY…GPAI), 590–610 (IPIS…VIGF), 621–641 (FLVL…IVAL), 646–666 (VIAS…CGFI), 675–695 (WWIW…LAVN), and 732–752 (ISIG…TICL). Residues 791 to 1043 (ITFEDIRYSV…ELIKYFEAIQ (253 aa)) enclose the ABC transporter 2 domain. 836 to 843 (GVSGAGKT) is an ATP binding site. One can recognise an ABC transmembrane type-2 2 domain in the interval 1116–1330 (TQWLACLWKQ…TLNGLLTSQF (215 aa)). Helical transmembrane passes span 1136-1156 (IVVR…MFWG), 1167-1183 (LFSI…AMGV), 1223-1243 (FPYI…MVGY), 1250-1270 (FLWY…YGMM), 1280-1300 (MSAV…GFLI), 1305-1325 (IPVW…LNGL), and 1357-1377 (LLWV…FLFG).

It belongs to the ABC transporter superfamily. ABCG family. PDR (TC 3.A.1.205) subfamily.

It localises to the membrane. In terms of biological role, may be a general defense protein. This is ABC transporter G family member 52 from Oryza sativa subsp. japonica (Rice).